The chain runs to 423 residues: Aspartate aminotransferase, mitochondrial (423 aa).

Residues 1–22 constitute a mitochondrion transit peptide; sequence MALLQSRLLLSAPRRAAATARA. 3 residues coordinate substrate: glycine 58, tryptophan 155, and asparagine 208. An N6-(pyridoxal phosphate)lysine modification is found at lysine 272. Residue arginine 400 coordinates substrate.

It belongs to the class-I pyridoxal-phosphate-dependent aminotransferase family. Homodimer. It depends on pyridoxal 5'-phosphate as a cofactor. Detected in heart (at protein level).

Its subcellular location is the mitochondrion matrix. The enzyme catalyses L-aspartate + 2-oxoglutarate = oxaloacetate + L-glutamate. It catalyses the reaction L-kynurenine + 2-oxoglutarate = kynurenate + L-glutamate + H2O. Its function is as follows. Catalyzes the irreversible transamination of the L-tryptophan metabolite L-kynurenine to form kynurenic acid (KA). As a member of the malate-aspartate shuttle, it has a key role in the intracellular NAD(H) redox balance. Is important for metabolite exchange between mitochondria and cytosol, and for amino acid metabolism. The chain is Aspartate aminotransferase, mitochondrial (GOT2) from Gallus gallus (Chicken).